The following is a 158-amino-acid chain: Ribosome-binding factor A (158 aa).

A disordered region spans residues 127-158 (RQGAVHAGDADPYKESAAEEPAAYEDDERRPD). Residues 134–143 (GDADPYKESA) are compositionally biased toward basic and acidic residues.

This sequence belongs to the RbfA family. Monomer. Binds 30S ribosomal subunits, but not 50S ribosomal subunits or 70S ribosomes.

Its subcellular location is the cytoplasm. Its function is as follows. One of several proteins that assist in the late maturation steps of the functional core of the 30S ribosomal subunit. Associates with free 30S ribosomal subunits (but not with 30S subunits that are part of 70S ribosomes or polysomes). Required for efficient processing of 16S rRNA. May interact with the 5'-terminal helix region of 16S rRNA. The chain is Ribosome-binding factor A from Mycobacteroides abscessus (strain ATCC 19977 / DSM 44196 / CCUG 20993 / CIP 104536 / JCM 13569 / NCTC 13031 / TMC 1543 / L948) (Mycobacterium abscessus).